Reading from the N-terminus, the 245-residue chain is tRNA pseudouridine synthase A (245 aa).

Residue Asp-52 is the Nucleophile of the active site. Tyr-111 provides a ligand contact to substrate.

The protein belongs to the tRNA pseudouridine synthase TruA family. Homodimer.

The catalysed reaction is uridine(38/39/40) in tRNA = pseudouridine(38/39/40) in tRNA. Its function is as follows. Formation of pseudouridine at positions 38, 39 and 40 in the anticodon stem and loop of transfer RNAs. This chain is tRNA pseudouridine synthase A, found in Thermotoga maritima (strain ATCC 43589 / DSM 3109 / JCM 10099 / NBRC 100826 / MSB8).